A 495-amino-acid chain; its full sequence is Trigger factor (495 aa).

Residues aspartate 162–proline 243 form the PPIase FKBP-type domain. The span at aspartate 425–phenylalanine 437 shows a compositional bias: basic and acidic residues. Positions aspartate 425 to lysine 495 are disordered. A compositionally biased stretch (low complexity) spans serine 450–alanine 461. Acidic residues predominate over residues threonine 486 to lysine 495.

It belongs to the FKBP-type PPIase family. Tig subfamily.

The protein resides in the cytoplasm. It catalyses the reaction [protein]-peptidylproline (omega=180) = [protein]-peptidylproline (omega=0). In terms of biological role, involved in protein export. Acts as a chaperone by maintaining the newly synthesized protein in an open conformation. Functions as a peptidyl-prolyl cis-trans isomerase. This Corynebacterium kroppenstedtii (strain DSM 44385 / JCM 11950 / CIP 105744 / CCUG 35717) protein is Trigger factor.